Consider the following 152-residue polypeptide: Ribosome maturation factor RimP (152 aa).

Belongs to the RimP family.

Its subcellular location is the cytoplasm. Its function is as follows. Required for maturation of 30S ribosomal subunits. The chain is Ribosome maturation factor RimP from Pseudothermotoga lettingae (strain ATCC BAA-301 / DSM 14385 / NBRC 107922 / TMO) (Thermotoga lettingae).